A 505-amino-acid chain; its full sequence is Metal transporter Nramp3.2 (505 aa).

Helical transmembrane passes span 50–70 (LWLFTGPGFLMSIAFLDPGNL), 78–98 (AIAGYSLLWLLLWATAMGLLV), 127–147 (MVLWIMAELALIGADIQEVIG), 159–179 (FVPLWAGVTITACDCFIFLFL), 187–207 (LEAVFAVLIGIMAVTFGWMFA), 233–253 (AVGVVGCIIMPHNVFLHSALV), 280–300 (ALVISFVINLFVTTVFAKGFY), 321–341 (YGGGFFPILYIWGIGLLAAGQ), 369–389 (ALITRSCAIIPTMIVALVFDT), 400–420 (WLNVLQSIQIPFALIPLLCLV), 439–459 (AWLVAALVMVINGYLLLDFFF), and 466–486 (AFTTVVCGFTGAYVAFIIYLI).

Belongs to the NRAMP (TC 2.A.55) family. Expressed in roots, stems, buds and leaves.

The protein resides in the vacuole membrane. The catalysed reaction is Mn(2+)(in) = Mn(2+)(out). It catalyses the reaction Fe(2+)(in) = Fe(2+)(out). Divalent metal transporter. Can transport manganese (Mn) and iron (Fe). Involved in the release of metals stored in the vacuole. The protein is Metal transporter Nramp3.2 of Populus trichocarpa (Western balsam poplar).